The sequence spans 91 residues: Bombyxin C-1 (91 aa).

The first 19 residues, 1–19, serve as a signal peptide directing secretion; that stretch reads MKLVMLLVVVSAMLVLGGA. Gln-20 carries the post-translational modification Pyrrolidone carboxylic acid. Disulfide bonds link Cys-27-Cys-76, Cys-39-Cys-89, and Cys-75-Cys-80. The propeptide at 47-67 is c peptide like; that stretch reads SGSQYAGYGWPWLPPFSSSRG.

It belongs to the insulin family. In terms of assembly, heterodimer of a B chain and an A chain linked by two disulfide bonds.

The protein localises to the secreted. Its function is as follows. Brain peptide responsible for activation of prothoracic glands to produce ecdysone in insects. In Bombyx mori (Silk moth), this protein is Bombyxin C-1 (BBXC1).